The chain runs to 331 residues: Fe-S cluster assembly protein DRE2 (331 aa).

Positions 1–146 are N-terminal SAM-like domain; the sequence is MSEILLLLHP…MPTFKKPVSS (146 aa). Positions 142–164 are disordered; that stretch reads KPVSSPVTLTDTSANNTDAEDDL. Polar residues predominate over residues 146-158; that stretch reads SPVTLTDTSANNT. The interval 147–202 is linker; sequence PVTLTDTSANNTDAEDDLSMKRKLDSTKLAYFSDDSSGEEDDLIDENELIADSHKF. Positions 212, 224, 227, and 229 each coordinate [2Fe-2S] cluster. The interval 212 to 229 is fe-S binding site A; that stretch reads CELPNGKKRKKACKDCTC. Positions 294, 297, 305, and 308 each coordinate [4Fe-4S] cluster. 2 consecutive short sequence motifs (cx2C motif) follow at residues 294–297 and 305–308; these read CSSC and CDGC. A fe-S binding site B region spans residues 294–308; it reads CSSCALGDAFRCDGC.

The protein belongs to the anamorsin family. In terms of assembly, monomer. Interacts with TAH18. Interacts with MIA40. [2Fe-2S] cluster serves as cofactor. Requires [4Fe-4S] cluster as cofactor.

It localises to the cytoplasm. The protein resides in the mitochondrion intermembrane space. Functionally, component of the cytosolic iron-sulfur (Fe-S) protein assembly (CIA) machinery required for the maturation of extramitochondrial Fe-S proteins. Part of an electron transfer chain functioning in an early step of cytosolic Fe-S biogenesis, facilitating the de novo assembly of a [4Fe-4S] cluster on the scaffold complex CFD1-NBP35. Electrons are transferred to DRE2 from NADPH via the FAD- and FMN-containing protein TAH18. TAH18-DRE2 are also required for the assembly of the diferric tyrosyl radical cofactor of ribonucleotide reductase (RNR), probably by providing electrons for reduction during radical cofactor maturation in the catalytic small subunit RNR2. The sequence is that of Fe-S cluster assembly protein DRE2 from Clavispora lusitaniae (strain ATCC 42720) (Yeast).